Consider the following 549-residue polypeptide: Neutral amino acid transporter 9 (549 aa).

Positions 1-27 (MDEDSKPLLGSVPTGDYYTDSLDPKQR) are disordered. Topologically, residues 1–107 (MDEDSKPLLG…GGDSPIKNPS (107 aa)) are cytoplasmic. A helical membrane pass occupies residues 108–128 (IVTIFAIWNTMMGTSILSIPW). The tract at residues 117-122 (TMMGTS) is important for arginine binding and amino acid transport. Serine 122 is an arginine binding site. The Lumenal portion of the chain corresponds to 129-134 (GIKQAG). A helical transmembrane segment spans residues 135–155 (FTLGIIIIVLMGLLTLYCCYR). Residues 156–186 (VLKSTKSIPYVDTSDWEFPDVCKYYFGGFGK) lie on the Cytoplasmic side of the membrane. Residues 187–213 (WSSLVFSLVSLIGAMVVYWVLMSNFLF) traverse the membrane as a helical segment. The Lumenal segment spans residues 214–271 (NTGKFIFNYVHNVNTSDAFGTNGTERVICPYPDVDPHGNSSTSLYSGSDNSTGLEFDH). 4 N-linked (GlcNAc...) asparagine glycosylation sites follow: asparagine 227, asparagine 235, asparagine 252, and asparagine 263. Cysteine 242 and cysteine 412 are disulfide-bonded. Residues 272–288 (WWSKTNTIPFYLILLLL) form a helical membrane-spanning segment. The Cytoplasmic segment spans residues 289–297 (PLLNFRSAS). The helical transmembrane segment at 298-322 (FFARFTFLGTISVIYLIFLVTYKAI) threads the bilayer. At 323 to 344 (QLGFHLEFHWFDSSMFFVPEFR) the chain is on the lumenal side. A helical membrane pass occupies residues 345–365 (TLFPQLSGVLTLAFFIHNCII). Topologically, residues 366 to 382 (TLMKNNKHQENNVRDLS) are cytoplasmic. Residues 383 to 403 (LAYLLVGLTYLYVGVLIFAAF) traverse the membrane as a helical segment. Residues 404–425 (PSPPLSKECIEPNFLDNFPSSD) lie on the Lumenal side of the membrane. A helical membrane pass occupies residues 426–446 (ILVFVARTFLLFQMTTVYPLL). Positions 432–442 (RTFLLFQMTTV) match the CARC motif motif. The CRAC motif motif lies at 445–451 (LLGYLVR). Over 447–467 (GYLVRVQLMGQIFGNHYPGFL) the chain is Cytoplasmic. A helical membrane pass occupies residues 468 to 488 (HVFVLNVFVVGAGVLMARFYP). The Lumenal segment spans residues 489-495 (NIGSIIR). The chain crosses the membrane as a helical span at residues 496-516 (YSGALCGLALVFVLPSLIHMV). The Cytoplasmic segment spans residues 517-528 (SLKRRGELRWTS). Residues 529 to 549 (TLFHGFLILLGVANLLGQFFM) traverse the membrane as a helical segment.

This sequence belongs to the amino acid/polyamine transporter 2 family. SLC38A9 subfamily. Associated component of the Ragulator complex. Associated component of the Rag GTPases heterodimers (RRAGA and RRAGC). Glycosylated.

The protein localises to the lysosome membrane. Its subcellular location is the late endosome membrane. The enzyme catalyses L-leucine(in) = L-leucine(out). It catalyses the reaction L-tyrosine(in) = L-tyrosine(out). The catalysed reaction is L-glutamine(out) = L-glutamine(in). It carries out the reaction L-asparagine(out) = L-asparagine(in). With respect to regulation, amino acid transport activity is increased by sodium. Transport of L-glutamine, leucine and tyrosine is increased by arginine binding. In terms of biological role, lysosomal amino acid transporter involved in the activation of mTORC1 in response to amino acid levels. Probably acts as an amino acid sensor of the Rag GTPases and Ragulator complexes, 2 complexes involved in amino acid sensing and activation of mTORC1, a signaling complex promoting cell growth in response to growth factors, energy levels, and amino acids. Following activation by amino acids, the Ragulator and Rag GTPases function as a scaffold recruiting mTORC1 to lysosomes where it is in turn activated. SLC38A9 mediates transport of amino acids with low capacity and specificity with a slight preference for polar amino acids. Acts as an arginine sensor. Following activation by arginine binding, mediates transport of L-glutamine, leucine and tyrosine with high efficiency, and is required for the efficient utilization of these amino acids after lysosomal protein degradation. However, the transport mechanism is not well defined and the role of sodium is not clear. Guanine exchange factor (GEF) that, upon arginine binding, stimulates GDP release from RRAGA and therefore activates the Rag GTPase heterodimer and the mTORC1 pathway in response to nutrient sufficiency. The polypeptide is Neutral amino acid transporter 9 (Danio rerio (Zebrafish)).